The chain runs to 652 residues: Carboxypeptidase S1 homolog A (652 aa).

The signal sequence occupies residues 1–19 (MRFAASIAVALPVIHAASA). A disulfide bridge connects residues cysteine 50 and cysteine 121. N-linked (GlcNAc...) asparagine glycans are attached at residues asparagine 77, asparagine 132, asparagine 161, asparagine 168, asparagine 184, and asparagine 202. Residue serine 238 is part of the active site. N-linked (GlcNAc...) asparagine glycans are attached at residues asparagine 260, asparagine 299, asparagine 347, and asparagine 410. Intrachain disulfides connect cysteine 325/cysteine 361 and cysteine 332/cysteine 354. Residue aspartate 458 is part of the active site. Substrate is bound at residue cysteine 461. N-linked (GlcNAc...) asparagine glycans are attached at residues asparagine 474, asparagine 492, and asparagine 505. Residue histidine 516 is part of the active site. Substrate is bound at residue glutamate 517. A disordered region spans residues 608–627 (AASKGNPPPTTTSSPTAAPT). Residues 618-627 (TTSSPTAAPT) show a composition bias toward low complexity. Glycine 629 carries GPI-anchor amidated glycine lipidation. Positions 630 to 652 (SAMLKAPVAMLAISALTVLAFFL) are cleaved as a propeptide — removed in mature form.

Belongs to the peptidase S10 family.

The protein localises to the cell membrane. The catalysed reaction is Preferential release of a C-terminal arginine or lysine residue.. In terms of biological role, extracellular serine carboxypeptidase that contributes to pathogenicity. The chain is Carboxypeptidase S1 homolog A (SCPA) from Trichophyton rubrum (Athlete's foot fungus).